The following is a 97-amino-acid chain: Aspartyl/glutamyl-tRNA(Asn/Gln) amidotransferase subunit C (97 aa).

The protein belongs to the GatC family. As to quaternary structure, heterotrimer of A, B and C subunits.

It carries out the reaction L-glutamyl-tRNA(Gln) + L-glutamine + ATP + H2O = L-glutaminyl-tRNA(Gln) + L-glutamate + ADP + phosphate + H(+). The catalysed reaction is L-aspartyl-tRNA(Asn) + L-glutamine + ATP + H2O = L-asparaginyl-tRNA(Asn) + L-glutamate + ADP + phosphate + 2 H(+). Allows the formation of correctly charged Asn-tRNA(Asn) or Gln-tRNA(Gln) through the transamidation of misacylated Asp-tRNA(Asn) or Glu-tRNA(Gln) in organisms which lack either or both of asparaginyl-tRNA or glutaminyl-tRNA synthetases. The reaction takes place in the presence of glutamine and ATP through an activated phospho-Asp-tRNA(Asn) or phospho-Glu-tRNA(Gln). The polypeptide is Aspartyl/glutamyl-tRNA(Asn/Gln) amidotransferase subunit C (Synechococcus sp. (strain CC9311)).